The sequence spans 244 residues: 1-(5-phosphoribosyl)-5-[(5-phosphoribosylamino)methylideneamino] imidazole-4-carboxamide isomerase (244 aa).

The Proton acceptor role is filled by aspartate 10. Catalysis depends on aspartate 132, which acts as the Proton donor.

It belongs to the HisA/HisF family.

Its subcellular location is the cytoplasm. It carries out the reaction 1-(5-phospho-beta-D-ribosyl)-5-[(5-phospho-beta-D-ribosylamino)methylideneamino]imidazole-4-carboxamide = 5-[(5-phospho-1-deoxy-D-ribulos-1-ylimino)methylamino]-1-(5-phospho-beta-D-ribosyl)imidazole-4-carboxamide. It functions in the pathway amino-acid biosynthesis; L-histidine biosynthesis; L-histidine from 5-phospho-alpha-D-ribose 1-diphosphate: step 4/9. This Xanthomonas euvesicatoria pv. vesicatoria (strain 85-10) (Xanthomonas campestris pv. vesicatoria) protein is 1-(5-phosphoribosyl)-5-[(5-phosphoribosylamino)methylideneamino] imidazole-4-carboxamide isomerase.